A 76-amino-acid chain; its full sequence is Dermaseptin-SP2 (76 aa).

A signal peptide spans 1-22; sequence MAFLKKSLFLVLFLGLVSLSIC. A propeptide spanning residues 23-45 is cleaved from the precursor; sequence EEEKRENEDEEEQEDEEQSEEKR. The tract at residues 24–44 is disordered; the sequence is EEKRENEDEEEQEDEEQSEEK. Acidic residues predominate over residues 30-41; it reads EDEEEQEDEEQS. Gln73 is subject to Glutamine amide. Residues 74 to 76 constitute a propeptide that is removed on maturation; it reads GEQ.

As to expression, expressed by the skin glands.

Its subcellular location is the secreted. It localises to the target cell membrane. Functionally, antimicrobial peptide with activity against Gram-positive and Gram-negative bacteria and fungi. Has been tested against E.coli (MIC=2.68-8 uM), S.aureus (ATCC 25923, MIC=2.68-8 uM), S.aureus (ATCC oxacillin resistant, MIC=2.68 uM), K.pneumoniae (MIC=10.71 uM) and C.albicans (MIC=10.71-32 uM). Probably acts by disturbing membrane functions with its alpha-helical amphipathic structure. May penetrate bacterial membranes, but stay at the mammalian membrane surface. Shows a very weak hemolytic activity. In Agalychnis spurrelli (Gliding leaf frog), this protein is Dermaseptin-SP2.